A 367-amino-acid polypeptide reads, in one-letter code: Glutamate 5-kinase (367 aa).

Lys-17 is an ATP binding site. Residues Ser-57, Asp-144, and Asn-156 each coordinate substrate. Residues 176 to 177 (SD) and 217 to 223 (TGGMVSK) contribute to the ATP site. One can recognise a PUA domain in the interval 279–357 (VGSLTLDEGA…SELPCELRRP (79 aa)).

It belongs to the glutamate 5-kinase family.

It is found in the cytoplasm. The enzyme catalyses L-glutamate + ATP = L-glutamyl 5-phosphate + ADP. The protein operates within amino-acid biosynthesis; L-proline biosynthesis; L-glutamate 5-semialdehyde from L-glutamate: step 1/2. In terms of biological role, catalyzes the transfer of a phosphate group to glutamate to form L-glutamate 5-phosphate. The sequence is that of Glutamate 5-kinase from Mycobacterium leprae (strain Br4923).